The chain runs to 592 residues: UvrABC system protein C (592 aa).

One can recognise a GIY-YIG domain in the interval 14–91 (KKPGCYLWKN…IKKHKPRYNI (78 aa)). The UVR domain maps to 197 to 232 (DQVLKDLKEKESIASEKFDFEQAKKYLDLQKAINLI).

Belongs to the UvrC family. As to quaternary structure, interacts with UvrB in an incision complex.

It localises to the cytoplasm. Its function is as follows. The UvrABC repair system catalyzes the recognition and processing of DNA lesions. UvrC both incises the 5' and 3' sides of the lesion. The N-terminal half is responsible for the 3' incision and the C-terminal half is responsible for the 5' incision. The protein is UvrABC system protein C of Mycoplasmoides gallisepticum (strain R(low / passage 15 / clone 2)) (Mycoplasma gallisepticum).